The chain runs to 659 residues: Ion-translocating oxidoreductase complex subunit C (659 aa).

2 4Fe-4S ferredoxin-type domains span residues 366–397 and 407–436; these read TEMGLSEPEQSCIRCGLCVDACPAGLLPQQLY and KARNHNLFDCIECGACAYVCPSNIPLVQYY. C377, C380, C383, C387, C416, C419, C422, and C426 together coordinate [4Fe-4S] cluster.

The protein belongs to the 4Fe4S bacterial-type ferredoxin family. RnfC subfamily. The complex is composed of six subunits: RnfA, RnfB, RnfC, RnfD, RnfE and RnfG. [4Fe-4S] cluster is required as a cofactor.

It is found in the cell inner membrane. Functionally, part of a membrane-bound complex that couples electron transfer with translocation of ions across the membrane. This chain is Ion-translocating oxidoreductase complex subunit C, found in Yersinia pestis bv. Antiqua (strain Nepal516).